We begin with the raw amino-acid sequence, 183 residues long: Protein jagunal homolog 1-B (183 aa).

Over 1-39 the chain is Cytoplasmic; it reads MASRAGPRATGTDGSDYQHRERVASHYQMSVALKSEIKK. The chain crosses the membrane as a helical span at residues 40–60; it reads LNIAHAVVWFLVAAQVLVSQL. Residues 61–71 are Lumenal-facing; sequence NLVSHKVVASP. A helical membrane pass occupies residues 72-92; the sequence is YQWEYTYLLSIIPTVFSFMAL. Residues 93-99 are Cytoplasmic-facing; it reads PKNNISY. A helical transmembrane segment spans residues 100-120; sequence LVISMISGGLFCIGPILYGGM. The Lumenal portion of the chain corresponds to 121–137; that stretch reads EMFPVAQQLYRHGKAYR. Residues 138 to 158 traverse the membrane as a helical segment; it reads FIFGFSAVSIMYLVLIISVQV. Residues 159 to 183 are Cytoplasmic-facing; that stretch reads HGWQIYYSKKLLDAWFTNTQDKKKK.

The protein belongs to the jagunal family.

It localises to the endoplasmic reticulum membrane. Its function is as follows. Endoplasmic reticulum transmembrane protein involved in vesicle-mediated transport, which is required for neutrophil function. In Danio rerio (Zebrafish), this protein is Protein jagunal homolog 1-B (jagn1b).